The sequence spans 458 residues: UPF0210 protein MmarC5_0151 (458 aa).

This sequence belongs to the UPF0210 family.

The chain is UPF0210 protein MmarC5_0151 from Methanococcus maripaludis (strain C5 / ATCC BAA-1333).